The following is a 608-amino-acid chain: MKWLKQLQSLHTKLVIVYVLLIIIGMQIIGLYFTNNLEKELLDNFKKNITQYAKQLEISIEKVYDEKGSVNAQKDIQNLLSEYANRQEIGEIRFIDKDQIIIATTKQSNRSLINQKANDSSVQKALSLGQSNDHLILKDYGGGKDRVWVYNIPVKVDKKVIGNIYIESKINDVYNQLNNINQIFIVGTAISLLITVILGFFIARTITKPITDMRNQTVEMSRGNYTQRVKIYGNDEIGELALAFNNLSKRVQEAQANTESEKRRLDSVITHMSDGIIATDRRGRIRIVNDMALKMLGMAKEDIIGYYMLSVLSLEDEFKLEEIQENNDSFLLDLNEEEGLIARVNFSTIVQETGFVTGYIAVLHDVTEQQQVERERREFVANVSHELRTPLTSMNSYIEALEEGAWKDEELAPQFLSVTREETERMIRLVNDLLQLSKMDNESDQINKEIIDFNMFINKIINRHEMSTKDTTFIRDIPKKTIFTEFDPDKMTQVFDNVITNAMKYSRGDKRVEFHVKQNPLYNRMTIRIKDNGIGIPINKVDKIFDRFYRVDKARTRKMGGTGLGLAISKEIVEAHNGRIWANSVEGQGTSIFITLPCEVIEDGDWDE.

2 helical membrane-spanning segments follow: residues 14-34 (LVIV…LYFT) and 183-203 (IFIV…FFIA). The HAMP domain occupies 204–256 (RTITKPITDMRNQTVEMSRGNYTQRVKIYGNDEIGELALAFNNLSKRVQEAQA). The PAS domain occupies 261–331 (EKRRLDSVIT…EIQENNDSFL (71 aa)). Residues His271, Asp274, His364, and Glu368 each contribute to the Zn(2+) site. Residues 314–378 (LEDEFKLEEI…QQQVERERRE (65 aa)) enclose the PAC domain. The Histidine kinase domain maps to 382-600 (NVSHELRTPL…SIFITLPCEV (219 aa)). Position 385 is a phosphohistidine; by autocatalysis (His385).

In terms of assembly, forms homodimers. Forms homooligomers. In terms of processing, autophosphorylated.

It is found in the cell membrane. It catalyses the reaction ATP + protein L-histidine = ADP + protein N-phospho-L-histidine.. By zinc. Zinc-binding negatively regulates WalK kinase activity and thus autophosphorylation. Functionally, member of the two-component regulatory system WalK/WalR that regulates genes involved in cell wall metabolism, virulence regulation, biofilm production, oxidative stress resistance and antibiotic resistance via direct or indirect regulation of autolysins. Functions as a sensor protein kinase which is autophosphorylated at a histidine residue in the dimerization domain and transfers its phosphate group to the conserved aspartic acid residue in the regulatory domain of WalR. In turn, WalR binds to the upstream promoter regions of the target genes to positively and negatively regulate their expression. This chain is Sensor protein kinase WalK (walK), found in Staphylococcus aureus (strain MRSA252).